Here is a 257-residue protein sequence, read N- to C-terminus: 3-deoxy-manno-octulosonate cytidylyltransferase (257 aa).

It belongs to the KdsB family.

The protein resides in the cytoplasm. The catalysed reaction is 3-deoxy-alpha-D-manno-oct-2-ulosonate + CTP = CMP-3-deoxy-beta-D-manno-octulosonate + diphosphate. Its pathway is nucleotide-sugar biosynthesis; CMP-3-deoxy-D-manno-octulosonate biosynthesis; CMP-3-deoxy-D-manno-octulosonate from 3-deoxy-D-manno-octulosonate and CTP: step 1/1. The protein operates within bacterial outer membrane biogenesis; lipopolysaccharide biosynthesis. Activates KDO (a required 8-carbon sugar) for incorporation into bacterial lipopolysaccharide in Gram-negative bacteria. This chain is 3-deoxy-manno-octulosonate cytidylyltransferase, found in Rhodospirillum centenum (strain ATCC 51521 / SW).